We begin with the raw amino-acid sequence, 557 residues long: Formate--tetrahydrofolate ligase (557 aa).

Thr67 to Thr74 provides a ligand contact to ATP.

The protein belongs to the formate--tetrahydrofolate ligase family.

It carries out the reaction (6S)-5,6,7,8-tetrahydrofolate + formate + ATP = (6R)-10-formyltetrahydrofolate + ADP + phosphate. Its pathway is one-carbon metabolism; tetrahydrofolate interconversion. In Cereibacter sphaeroides (strain ATCC 17029 / ATH 2.4.9) (Rhodobacter sphaeroides), this protein is Formate--tetrahydrofolate ligase.